Consider the following 379-residue polypeptide: UDP-4-amino-4-deoxy-L-arabinose--oxoglutarate aminotransferase (379 aa).

Lys182 carries the N6-(pyridoxal phosphate)lysine modification.

This sequence belongs to the DegT/DnrJ/EryC1 family. ArnB subfamily. As to quaternary structure, homodimer. Pyridoxal 5'-phosphate is required as a cofactor.

The catalysed reaction is UDP-4-amino-4-deoxy-beta-L-arabinose + 2-oxoglutarate = UDP-beta-L-threo-pentopyranos-4-ulose + L-glutamate. It functions in the pathway nucleotide-sugar biosynthesis; UDP-4-deoxy-4-formamido-beta-L-arabinose biosynthesis; UDP-4-deoxy-4-formamido-beta-L-arabinose from UDP-alpha-D-glucuronate: step 2/3. The protein operates within bacterial outer membrane biogenesis; lipopolysaccharide biosynthesis. In terms of biological role, catalyzes the conversion of UDP-4-keto-arabinose (UDP-Ara4O) to UDP-4-amino-4-deoxy-L-arabinose (UDP-L-Ara4N). The modified arabinose is attached to lipid A and is required for resistance to polymyxin and cationic antimicrobial peptides. The protein is UDP-4-amino-4-deoxy-L-arabinose--oxoglutarate aminotransferase of Shigella boydii serotype 4 (strain Sb227).